Here is a 108-residue protein sequence, read N- to C-terminus: Large ribosomal subunit protein uL24 (108 aa).

Belongs to the universal ribosomal protein uL24 family. As to quaternary structure, part of the 50S ribosomal subunit.

One of two assembly initiator proteins, it binds directly to the 5'-end of the 23S rRNA, where it nucleates assembly of the 50S subunit. Functionally, one of the proteins that surrounds the polypeptide exit tunnel on the outside of the subunit. The polypeptide is Large ribosomal subunit protein uL24 (Mycoplasma mycoides subsp. mycoides SC (strain CCUG 32753 / NCTC 10114 / PG1)).